Here is a 129-residue protein sequence, read N- to C-terminus: Glycine cleavage system H protein (129 aa).

Residues 23-104 (SVTVGITHHA…AYTAWLFKIK (82 aa)) form the Lipoyl-binding domain. K64 bears the N6-lipoyllysine mark.

Belongs to the GcvH family. The glycine cleavage system is composed of four proteins: P, T, L and H. (R)-lipoate is required as a cofactor.

In terms of biological role, the glycine cleavage system catalyzes the degradation of glycine. The H protein shuttles the methylamine group of glycine from the P protein to the T protein. The polypeptide is Glycine cleavage system H protein (Thiobacillus denitrificans (strain ATCC 25259 / T1)).